A 31-amino-acid chain; its full sequence is Cytochrome b6-f complex subunit 6 (31 aa).

Residues 4–24 (VVSYLGILAAFALVTIGIFLV) form a helical membrane-spanning segment.

Belongs to the PetL family. As to quaternary structure, the 4 large subunits of the cytochrome b6-f complex are cytochrome b6, subunit IV (17 kDa polypeptide, PetD), cytochrome f and the Rieske protein, while the 4 small subunits are PetG, PetL, PetM and PetN. The complex functions as a dimer.

It localises to the plastid. Its subcellular location is the chloroplast thylakoid membrane. Functionally, component of the cytochrome b6-f complex, which mediates electron transfer between photosystem II (PSII) and photosystem I (PSI), cyclic electron flow around PSI, and state transitions. PetL is important for photoautotrophic growth as well as for electron transfer efficiency and stability of the cytochrome b6-f complex. This chain is Cytochrome b6-f complex subunit 6, found in Mesostigma viride (Green alga).